A 432-amino-acid chain; its full sequence is Transcriptional adapter 3 (432 aa).

Residues 40–69 (IEELDTLQLELETLLSSASRRLRVLEAETQ) adopt a coiled-coil conformation. 2 disordered regions span residues 88–127 (KEHE…RNMQ) and 275–313 (SPVE…HTKS). Polar residues predominate over residues 293–305 (DGASTSPRSQNKP). Residues 367–407 (LLRLAKEEMNRQELRQRVRMADNEVMDAFRKIMAARQKKRT) adopt a coiled-coil conformation.

This sequence belongs to the NGG1 family.

It is found in the nucleus. Functionally, functions as a component of the PCAF complex. The PCAF complex is capable of efficiently acetylating histones in a nucleosomal context. This Xenopus tropicalis (Western clawed frog) protein is Transcriptional adapter 3 (tada3).